Consider the following 392-residue polypeptide: MAAAALGQIWARKFLSVPWLLCGPRRYASSSFKAADLQLEMTQKPHKKPGPGEPLVFGKTFTDHMLMVEWSDKGWGQPRIQPFQNLTLHPASSSLHYSLQLFEGMKAFKGKDQQVRLFRPWLNMDRMLRSAMRLCLPSFDKLELLECIRRLIEVDKDWVPDAAGTSLYVRPVLIGNEPSLGVSQPTRALLFVILCPVGTYFPGGSVTPVSLLADPAFIRAWVGGVGNYKLGGNYGPTVLVQQEALKQGCEQVLWLYGPDHQLTEVGTMNIFVYWTHEDGVLELVTPPLNGVILPGVVRQSLLDLAQTWGEFRVVERTITTKQLLQALEEGRVREVFGSGTACQVCPVHRILYKDRNLHIPTMENGPELILRFQKELKEIQYGIRAHEWMFPV.

A mitochondrion-targeting transit peptide spans 1–27 (MAAAALGQIWARKFLSVPWLLCGPRRY). Residue tyrosine 168 participates in substrate binding. The residue at position 229 (lysine 229) is an N6-(pyridoxal phosphate)lysine. Lysine 321 carries the post-translational modification N6-acetyllysine.

This sequence belongs to the class-IV pyridoxal-phosphate-dependent aminotransferase family. As to quaternary structure, homodimer. The cofactor is pyridoxal 5'-phosphate.

The protein localises to the mitochondrion. The enzyme catalyses L-leucine + 2-oxoglutarate = 4-methyl-2-oxopentanoate + L-glutamate. The catalysed reaction is L-isoleucine + 2-oxoglutarate = (S)-3-methyl-2-oxopentanoate + L-glutamate. It carries out the reaction L-valine + 2-oxoglutarate = 3-methyl-2-oxobutanoate + L-glutamate. Catalyzes the first reaction in the catabolism of the essential branched chain amino acids leucine, isoleucine, and valine. May also function as a transporter of branched chain alpha-keto acids. The polypeptide is Branched-chain-amino-acid aminotransferase, mitochondrial (BCAT2) (Pongo abelii (Sumatran orangutan)).